Here is a 351-residue protein sequence, read N- to C-terminus: S-adenosylmethionine:tRNA ribosyltransferase-isomerase (351 aa).

It belongs to the QueA family. As to quaternary structure, monomer.

It is found in the cytoplasm. The enzyme catalyses 7-aminomethyl-7-carbaguanosine(34) in tRNA + S-adenosyl-L-methionine = epoxyqueuosine(34) in tRNA + adenine + L-methionine + 2 H(+). Its pathway is tRNA modification; tRNA-queuosine biosynthesis. Functionally, transfers and isomerizes the ribose moiety from AdoMet to the 7-aminomethyl group of 7-deazaguanine (preQ1-tRNA) to give epoxyqueuosine (oQ-tRNA). This is S-adenosylmethionine:tRNA ribosyltransferase-isomerase from Idiomarina loihiensis (strain ATCC BAA-735 / DSM 15497 / L2-TR).